We begin with the raw amino-acid sequence, 362 residues long: Aminomethyltransferase (362 aa).

This sequence belongs to the GcvT family. The glycine cleavage system is composed of four proteins: P, T, L and H.

The catalysed reaction is N(6)-[(R)-S(8)-aminomethyldihydrolipoyl]-L-lysyl-[protein] + (6S)-5,6,7,8-tetrahydrofolate = N(6)-[(R)-dihydrolipoyl]-L-lysyl-[protein] + (6R)-5,10-methylene-5,6,7,8-tetrahydrofolate + NH4(+). In terms of biological role, the glycine cleavage system catalyzes the degradation of glycine. The polypeptide is Aminomethyltransferase (Listeria monocytogenes serotype 4b (strain CLIP80459)).